The following is a 444-amino-acid chain: Tubulin beta chain (444 aa).

Positions 11, 69, 138, 142, 143, 144, 204, and 226 each coordinate GTP. Residue Glu-69 coordinates Mg(2+).

It belongs to the tubulin family. As to quaternary structure, dimer of alpha and beta chains. A typical microtubule is a hollow water-filled tube with an outer diameter of 25 nm and an inner diameter of 15 nM. Alpha-beta heterodimers associate head-to-tail to form protofilaments running lengthwise along the microtubule wall with the beta-tubulin subunit facing the microtubule plus end conferring a structural polarity. Microtubules usually have 13 protofilaments but different protofilament numbers can be found in some organisms and specialized cells. Requires Mg(2+) as cofactor.

The protein localises to the cytoplasm. It localises to the cytoskeleton. Tubulin is the major constituent of microtubules, a cylinder consisting of laterally associated linear protofilaments composed of alpha- and beta-tubulin heterodimers. Microtubules grow by the addition of GTP-tubulin dimers to the microtubule end, where a stabilizing cap forms. Below the cap, tubulin dimers are in GDP-bound state, owing to GTPase activity of alpha-tubulin. This is Tubulin beta chain from Trichuris trichiura (Whipworm).